The sequence spans 864 residues: Leucine--tRNA ligase (864 aa).

A 'HIGH' region motif is present at residues 40-51; sequence PYPSGAGLHVGH. Positions 636 to 640 match the 'KMSKS' region motif; it reads KMSKS. Residue lysine 639 participates in ATP binding.

The protein belongs to the class-I aminoacyl-tRNA synthetase family.

The protein localises to the cytoplasm. It catalyses the reaction tRNA(Leu) + L-leucine + ATP = L-leucyl-tRNA(Leu) + AMP + diphosphate. The chain is Leucine--tRNA ligase from Leptospira borgpetersenii serovar Hardjo-bovis (strain JB197).